The following is a 366-amino-acid chain: Nodulation protein NolL (366 aa).

9 consecutive transmembrane segments (helical) span residues 27-47, 62-82, 98-118, 140-160, 164-184, 212-232, 253-273, 286-306, and 324-344; these read FVKG…LVIY, IYMF…SGTI, LLIP…AAFF, FLWA…FNLL, ILCA…IVPL, HKSL…LDWG, VLLM…SLFH, LVAV…GAVF, and IVVA…VLWI.

The protein belongs to the acyltransferase 3 family.

Its subcellular location is the cell membrane. Thought to be an acetyltransferase that modifies the fucose of the nod factor. This Sinorhizobium fredii (strain NBRC 101917 / NGR234) protein is Nodulation protein NolL (nolL).